We begin with the raw amino-acid sequence, 374 residues long: Homeobox protein knotted-1-like 13 (374 aa).

Residues 214–242 (TGASPGEGTGATMSDGEDDQADSEANMYD) are disordered. The 21-residue stretch at 270–290 (ELKHELKQGYKEKLIDIREEI) folds into the ELK domain. Residues 291 to 354 (LRKRRAGKLP…NQRKRNWHSN (64 aa)) constitute a DNA-binding region (homeobox; TALE-type). Residues 347-374 (RKRNWHSNPSSSTSVKTKRKSNAGDNNS) are disordered.

The protein belongs to the TALE/KNOX homeobox family. In terms of tissue distribution, isoforms 1 and 2 are expressed in roots, stems, shoot meristem, leaf blades, leaf sheaths and flowers. Isoform 3 is expressed in stems, shoot meristem, rachis, leaf blades and leaf sheaths.

The protein resides in the nucleus. In terms of biological role, isoform 3 acts as a transcription activator, but isoforms 1 and 2 do not. In Oryza sativa subsp. japonica (Rice), this protein is Homeobox protein knotted-1-like 13 (OSH45).